We begin with the raw amino-acid sequence, 262 residues long: MGRVSTEALPSGLLNWVAVWRRNFLAWKKVAPASLLGNLADPMIYIFGLGSGLGVMLGNVGGVSYSAFLAAGMVATSAMTASTFETIYATFARMRDHRTWEAMLYTKLTLGDIVLGEMAWAATKASLAGTAIGIVTATLAYSEWDSLIYVFPVIALTGLAFASLSMVVAALAPSYDYLVFYQSLVITPMLVLSGSVFPVEQLSPMLQRITHLLPLAHSIDLIRPAMLGHPVPDITLHLGALCLYIVLPFFVSIALLRRRLTQ.

The ABC transmembrane type-2 domain occupies 33 to 259 (ASLLGNLADP…FVSIALLRRR (227 aa)). The next 6 helical transmembrane spans lie at 43 to 63 (MIYI…VGGV), 67 to 87 (AFLA…FETI), 119 to 139 (AWAA…TATL), 148 to 168 (IYVF…SMVV), 177 to 197 (YLVF…GSVF), and 236 to 256 (LHLG…IALL).

This sequence belongs to the ABC-2 integral membrane protein family. Lipooligosaccharide exporter (TC 3.A.1.102) subfamily. As to quaternary structure, the complex is composed of two ATP-binding proteins (NodI) and two transmembrane proteins (NodJ).

It localises to the cell inner membrane. Functionally, part of the ABC transporter complex NodIJ involved in the export of the nodulation factors (Nod factors), the bacterial signal molecules that induce symbiosis and subsequent nodulation induction. Nod factors are LCO (lipo-chitin oligosaccharide), a modified beta-1,4-linked N-acetylglucosamine oligosaccharide. This subunit encodes the transporter. This is Nodulation protein J (nodJ) from Neorhizobium galegae (Rhizobium galegae).